The primary structure comprises 320 residues: Cytochrome f (320 aa).

Positions 1-35 are cleaved as a signal peptide; that stretch reads MQTRNTFSWIREEITRSISVSLMIYIITWASISSA. Heme-binding residues include tyrosine 36, cysteine 56, cysteine 59, and histidine 60. A helical transmembrane segment spans residues 286–306; that stretch reads VQGLLFFLGSVVLAQIFLVLK.

The protein belongs to the cytochrome f family. As to quaternary structure, the 4 large subunits of the cytochrome b6-f complex are cytochrome b6, subunit IV (17 kDa polypeptide, petD), cytochrome f and the Rieske protein, while the 4 small subunits are PetG, PetL, PetM and PetN. The complex functions as a dimer. It depends on heme as a cofactor.

The protein resides in the plastid. Its subcellular location is the chloroplast thylakoid membrane. In terms of biological role, component of the cytochrome b6-f complex, which mediates electron transfer between photosystem II (PSII) and photosystem I (PSI), cyclic electron flow around PSI, and state transitions. The chain is Cytochrome f from Barbarea verna (Land cress).